A 256-amino-acid polypeptide reads, in one-letter code: MQWQDHAIILGIKRHGETSVIAEVMTRDRGRHLGLVRSGRSRAMQPVLQPGNAVEVIWRARLDEHLGEFRVEPVTLRAARLMETATAVYGVQAMGALLRLLPERDPHPHLFDALEVILDHLHNPADAGELFVRFELAVLNDLGFGLDLGECAATGARSDLAYVSPKSGRAVSRSAGAPWADKMLLLPPFLGVEGNHAADFDSLAAAFRLTGFFLHRHVYEPRGMEAAAARDGFVQAALKALNPALRTLAGPNGVSA.

It belongs to the RecO family.

Its function is as follows. Involved in DNA repair and RecF pathway recombination. This Rhizobium etli (strain CIAT 652) protein is DNA repair protein RecO.